The primary structure comprises 1369 residues: Rho-associated protein kinase 1 (1369 aa).

Position 2 is an N-acetylserine (Ser2). The region spanning 76–338 (YEVVKVIGRG…VEEIKRHLFF (263 aa)) is the Protein kinase domain. ATP-binding positions include 82–90 (IGRGAFGEV) and Lys105. Asp198 acts as the Proton acceptor in catalysis. The AGC-kinase C-terminal domain occupies 341 to 409 (DQWAWETLRD…YSNRRYLPSA (69 aa)). The segment at 368–727 (FDDLEEDKGD…KKLKEEREAR (360 aa)) is interaction with FHOD1. Residues 422 to 692 (KNVQESLQKT…RLEQEVNEHK (271 aa)) adopt a coiled-coil conformation. The 78-residue stretch at 479–556 (SAVSQIEKEK…LEEANDLLRT (78 aa)) folds into the REM-1 domain. The interval 707-946 (EAKSVAMCEM…TVSRLEEANN (240 aa)) is SHROOM3 binding. The 67-residue stretch at 949–1015 (TKDIELLRKE…LAEIMNRKDF (67 aa)) folds into the RhoBD domain. The segment at 998–1010 (LKTQAVNKLAEIM) is RHOA binding. A coiled-coil region spans residues 1011-1102 (NRKDFKIDRK…KLLDLSDSTS (92 aa)). 2 positions are modified to phosphoserine: Ser1105 and Ser1108. An auto-inhibitory region spans residues 1115-1369 (NLPVGSACIP…VVKNTSGKTS (255 aa)). In terms of domain architecture, PH spans 1133 to 1332 (SSRIEGWLSV…WVTHLVKKIP (200 aa)). The Phorbol-ester/DAG-type zinc finger occupies 1243-1298 (GHEFIPTLYHFPANCEACAKPLWHVFKPPPALECRRCHVKSHRDHLDKKEDLIPPC). Ser1343 carries the post-translational modification Phosphoserine.

The protein belongs to the protein kinase superfamily. AGC Ser/Thr protein kinase family. Homodimer. Interacts with GEM, MYLC2B, RHOE, LIMK1, LIMK2, TSG101, CHORDC1, DAPK3, PFN1, PTEN and JIP3. Interacts with FHOD1 in a Src-dependent manner. Interacts with ITGB1BP1 (via N-terminus and PTB domain). Interacts with RHOA (activated by GTP), RHOB, RHOC and PPP1R12A. Interacts with SHROOM3. It depends on Mg(2+) as a cofactor. Autophosphorylated on serine and threonine residues. In terms of processing, cleaved by caspase-3 during apoptosis. This leads to constitutive activation of the kinase and membrane blebbing. In terms of tissue distribution, highly expressed in brain, spleen, lung, liver, skeletal muscle, kidney and testis.

It localises to the cytoplasm. The protein localises to the cytoskeleton. It is found in the microtubule organizing center. Its subcellular location is the centrosome. The protein resides in the centriole. It localises to the golgi apparatus membrane. The protein localises to the cell projection. It is found in the bleb. Its subcellular location is the cell membrane. The protein resides in the lamellipodium. It localises to the ruffle. The enzyme catalyses L-seryl-[protein] + ATP = O-phospho-L-seryl-[protein] + ADP + H(+). The catalysed reaction is L-threonyl-[protein] + ATP = O-phospho-L-threonyl-[protein] + ADP + H(+). Activated by RHOA binding. Inhibited by Y-27632. Functionally, protein kinase which is a key regulator of the actin cytoskeleton and cell polarity. Involved in regulation of smooth muscle contraction, actin cytoskeleton organization, stress fiber and focal adhesion formation, neurite retraction, cell adhesion and motility via phosphorylation of DAPK3, GFAP, LIMK1, LIMK2, MYL9/MLC2, TPPP, PFN1 and PPP1R12A. Phosphorylates FHOD1 and acts synergistically with it to promote SRC-dependent non-apoptotic plasma membrane blebbing. Phosphorylates JIP3 and regulates the recruitment of JNK to JIP3 upon UVB-induced stress. Acts as a suppressor of inflammatory cell migration by regulating PTEN phosphorylation and stability. Acts as a negative regulator of VEGF-induced angiogenic endothelial cell activation. Required for centrosome positioning and centrosome-dependent exit from mitosis. Plays a role in terminal erythroid differentiation. Inhibits podocyte motility via regulation of actin cytoskeletal dynamics and phosphorylation of CFL1. Promotes keratinocyte terminal differentiation. Involved in osteoblast compaction through the fibronectin fibrillogenesis cell-mediated matrix assembly process, essential for osteoblast mineralization. May regulate closure of the eyelids and ventral body wall by inducing the assembly of actomyosin bundles. The sequence is that of Rho-associated protein kinase 1 (Rock1) from Rattus norvegicus (Rat).